We begin with the raw amino-acid sequence, 168 residues long: ATP synthase subunit b (168 aa).

A helical transmembrane segment spans residues 9–29 (LFNLSTFVFTIINLLVLYYIL).

It belongs to the ATPase B chain family. As to quaternary structure, F-type ATPases have 2 components, F(1) - the catalytic core - and F(0) - the membrane proton channel. F(1) has five subunits: alpha(3), beta(3), gamma(1), delta(1), epsilon(1). F(0) has three main subunits: a(1), b(2) and c(10-14). The alpha and beta chains form an alternating ring which encloses part of the gamma chain. F(1) is attached to F(0) by a central stalk formed by the gamma and epsilon chains, while a peripheral stalk is formed by the delta and b chains.

It localises to the cell membrane. Functionally, f(1)F(0) ATP synthase produces ATP from ADP in the presence of a proton or sodium gradient. F-type ATPases consist of two structural domains, F(1) containing the extramembraneous catalytic core and F(0) containing the membrane proton channel, linked together by a central stalk and a peripheral stalk. During catalysis, ATP synthesis in the catalytic domain of F(1) is coupled via a rotary mechanism of the central stalk subunits to proton translocation. Its function is as follows. Component of the F(0) channel, it forms part of the peripheral stalk, linking F(1) to F(0). The chain is ATP synthase subunit b from Caldanaerobacter subterraneus subsp. tengcongensis (strain DSM 15242 / JCM 11007 / NBRC 100824 / MB4) (Thermoanaerobacter tengcongensis).